A 1414-amino-acid polypeptide reads, in one-letter code: DNA-directed RNA polymerase subunit beta' (1414 aa).

Residues C72, C74, C87, and C90 each coordinate Zn(2+). Positions 463, 465, and 467 each coordinate Mg(2+). Zn(2+)-binding residues include C811, C885, C892, and C895.

This sequence belongs to the RNA polymerase beta' chain family. The RNAP catalytic core consists of 2 alpha, 1 beta, 1 beta' and 1 omega subunit. When a sigma factor is associated with the core the holoenzyme is formed, which can initiate transcription. The cofactor is Mg(2+). Zn(2+) serves as cofactor.

It carries out the reaction RNA(n) + a ribonucleoside 5'-triphosphate = RNA(n+1) + diphosphate. Functionally, DNA-dependent RNA polymerase catalyzes the transcription of DNA into RNA using the four ribonucleoside triphosphates as substrates. The polypeptide is DNA-directed RNA polymerase subunit beta' (Roseobacter denitrificans (strain ATCC 33942 / OCh 114) (Erythrobacter sp. (strain OCh 114))).